Reading from the N-terminus, the 267-residue chain is MLGANGAGKTTTFRMMLGLLEPTEGEMTWKGEKIDYSRTNVIGYLPEERGLYPKLKVRDQLIYLGRLKGMHKKDIIPEMRMWLERFKVTDYETKRIEELSKGNQQKIQFIASVIHRPELLILDEPFSGLDPVNAELLKEAVIDLKKKGTTIVFSSHRMDHVEELCQHLCILRHGTPVVKGELREIKRSFRNKFIVIEGERSFETLKNLPGVKKFQQKQGGVRLQVEDEEVAKVIFAEVAKSGYVRRFEVEEPSLQDIFIEKVGTAYA.

The 197-residue stretch at 2–198 (LGANGAGKTT…FRNKFIVIEG (197 aa)) folds into the ABC transporter domain. 3–10 (GANGAGKT) serves as a coordination point for ATP.

The protein belongs to the ABC transporter superfamily.

This is an uncharacterized protein from Alkalihalophilus pseudofirmus (strain ATCC BAA-2126 / JCM 17055 / OF4) (Bacillus pseudofirmus).